Consider the following 518-residue polypeptide: Chaperonin GroEL (518 aa).

Residues 30-33, lysine 51, 87-91, and glycine 415 contribute to the ATP site; these read TLGP and DGTTT.

This sequence belongs to the chaperonin (HSP60) family. As to quaternary structure, forms a cylinder of 14 subunits composed of two heptameric rings stacked back-to-back. Interacts with the co-chaperonin GroES.

It localises to the cytoplasm. It carries out the reaction ATP + H2O + a folded polypeptide = ADP + phosphate + an unfolded polypeptide.. In terms of biological role, together with its co-chaperonin GroES, plays an essential role in assisting protein folding. The GroEL-GroES system forms a nano-cage that allows encapsulation of the non-native substrate proteins and provides a physical environment optimized to promote and accelerate protein folding. In Desulfotalea psychrophila (strain LSv54 / DSM 12343), this protein is Chaperonin GroEL.